The primary structure comprises 251 residues: DNA repair protein RecO (251 aa).

Belongs to the RecO family.

Its function is as follows. Involved in DNA repair and RecF pathway recombination. In Nitratidesulfovibrio vulgaris (strain ATCC 29579 / DSM 644 / CCUG 34227 / NCIMB 8303 / VKM B-1760 / Hildenborough) (Desulfovibrio vulgaris), this protein is DNA repair protein RecO.